Here is a 262-residue protein sequence, read N- to C-terminus: Ribosomal RNA small subunit methyltransferase A (262 aa).

S-adenosyl-L-methionine-binding residues include Asn-20, Leu-22, Gly-47, Glu-68, Asp-90, and Asn-110.

It belongs to the class I-like SAM-binding methyltransferase superfamily. rRNA adenine N(6)-methyltransferase family. RsmA subfamily.

The protein resides in the cytoplasm. It carries out the reaction adenosine(1518)/adenosine(1519) in 16S rRNA + 4 S-adenosyl-L-methionine = N(6)-dimethyladenosine(1518)/N(6)-dimethyladenosine(1519) in 16S rRNA + 4 S-adenosyl-L-homocysteine + 4 H(+). Functionally, specifically dimethylates two adjacent adenosines (A1518 and A1519) in the loop of a conserved hairpin near the 3'-end of 16S rRNA in the 30S particle. May play a critical role in biogenesis of 30S subunits. The chain is Ribosomal RNA small subunit methyltransferase A from Chlorobium phaeobacteroides (strain BS1).